The following is a 946-amino-acid chain: Bifunctional glutamine synthetase adenylyltransferase/adenylyl-removing enzyme (946 aa).

The segment at methionine 1–glutamate 440 is adenylyl removase. Positions serine 449 to glutamate 946 are adenylyl transferase.

The protein belongs to the GlnE family. It depends on Mg(2+) as a cofactor.

The catalysed reaction is [glutamine synthetase]-O(4)-(5'-adenylyl)-L-tyrosine + phosphate = [glutamine synthetase]-L-tyrosine + ADP. The enzyme catalyses [glutamine synthetase]-L-tyrosine + ATP = [glutamine synthetase]-O(4)-(5'-adenylyl)-L-tyrosine + diphosphate. Its function is as follows. Involved in the regulation of glutamine synthetase GlnA, a key enzyme in the process to assimilate ammonia. When cellular nitrogen levels are high, the C-terminal adenylyl transferase (AT) inactivates GlnA by covalent transfer of an adenylyl group from ATP to specific tyrosine residue of GlnA, thus reducing its activity. Conversely, when nitrogen levels are low, the N-terminal adenylyl removase (AR) activates GlnA by removing the adenylyl group by phosphorolysis, increasing its activity. The regulatory region of GlnE binds the signal transduction protein PII (GlnB) which indicates the nitrogen status of the cell. This Escherichia coli (strain SMS-3-5 / SECEC) protein is Bifunctional glutamine synthetase adenylyltransferase/adenylyl-removing enzyme.